The chain runs to 204 residues: Large ribosomal subunit protein uL18 (204 aa).

Belongs to the universal ribosomal protein uL18 family. Part of the 50S ribosomal subunit. Contacts the 5S and 23S rRNAs.

This is one of the proteins that bind and probably mediate the attachment of the 5S RNA into the large ribosomal subunit, where it forms part of the central protuberance. The polypeptide is Large ribosomal subunit protein uL18 (Ignicoccus hospitalis (strain KIN4/I / DSM 18386 / JCM 14125)).